A 335-amino-acid polypeptide reads, in one-letter code: Olfactory receptor 9K2 (335 aa).

At M1–I50 the chain is on the extracellular side. N30 carries an N-linked (GlcNAc...) asparagine glycan. The helical transmembrane segment at L51 to M71 threads the bilayer. The Cytoplasmic portion of the chain corresponds to T72 to R79. The chain crosses the membrane as a helical span at residues L80–S100. Topologically, residues V101–A124 are extracellular. N-linked (GlcNAc...) asparagine glycosylation occurs at N114. C122 and C214 are disulfide-bonded. A helical membrane pass occupies residues Q125–Y145. The Cytoplasmic portion of the chain corresponds to D146–R164. Residues L165–T185 form a helical membrane-spanning segment. The Extracellular portion of the chain corresponds to S186 to M222. The helical transmembrane segment at I223 to S242 threads the bilayer. The Cytoplasmic segment spans residues Y243–A262. Residues F263 to M283 form a helical membrane-spanning segment. Topologically, residues Y284–V296 are extracellular. Residues R316 to L335 are Cytoplasmic-facing.

This sequence belongs to the G-protein coupled receptor 1 family.

The protein localises to the cell membrane. In terms of biological role, odorant receptor. The sequence is that of Olfactory receptor 9K2 (OR9K2) from Homo sapiens (Human).